Consider the following 199-residue polypeptide: Pyridoxine/pyridoxamine 5'-phosphate oxidase (199 aa).

Residues 44-49, 59-60, lysine 66, and glutamine 91 contribute to the FMN site; these read RTVLLK and YT. Lysine 49 lines the substrate pocket. Tyrosine 109, arginine 113, and serine 117 together coordinate substrate. Residues 126–127 and tryptophan 171 each bind FMN; that span reads QS. A substrate-binding site is contributed by 177 to 179; that stretch reads RLH. Arginine 181 provides a ligand contact to FMN.

Belongs to the pyridoxamine 5'-phosphate oxidase family. In terms of assembly, homodimer. The cofactor is FMN.

It carries out the reaction pyridoxamine 5'-phosphate + O2 + H2O = pyridoxal 5'-phosphate + H2O2 + NH4(+). The catalysed reaction is pyridoxine 5'-phosphate + O2 = pyridoxal 5'-phosphate + H2O2. It participates in cofactor metabolism; pyridoxal 5'-phosphate salvage; pyridoxal 5'-phosphate from pyridoxamine 5'-phosphate: step 1/1. It functions in the pathway cofactor metabolism; pyridoxal 5'-phosphate salvage; pyridoxal 5'-phosphate from pyridoxine 5'-phosphate: step 1/1. Functionally, catalyzes the oxidation of either pyridoxine 5'-phosphate (PNP) or pyridoxamine 5'-phosphate (PMP) into pyridoxal 5'-phosphate (PLP). In Xanthomonas axonopodis pv. citri (strain 306), this protein is Pyridoxine/pyridoxamine 5'-phosphate oxidase.